We begin with the raw amino-acid sequence, 181 residues long: TATA-box-binding protein (181 aa).

Tandem repeats lie at residues 7 to 83 (IVNV…MEYL) and 98 to 173 (VQNM…KNTV).

Belongs to the TBP family.

Functionally, general factor that plays a role in the activation of archaeal genes transcribed by RNA polymerase. Binds specifically to the TATA box promoter element which lies close to the position of transcription initiation. In Methanococcus aeolicus (strain ATCC BAA-1280 / DSM 17508 / OCM 812 / Nankai-3), this protein is TATA-box-binding protein.